The primary structure comprises 177 residues: Large ribosomal subunit protein bL9 (177 aa).

The interval 151 to 177 (VEEEPAEEVEAPAETEVAEDAEEATEA) is disordered.

This sequence belongs to the bacterial ribosomal protein bL9 family.

Its function is as follows. Binds to the 23S rRNA. The chain is Large ribosomal subunit protein bL9 from Maridesulfovibrio salexigens (strain ATCC 14822 / DSM 2638 / NCIMB 8403 / VKM B-1763) (Desulfovibrio salexigens).